A 444-amino-acid polypeptide reads, in one-letter code: Na(+)/H(+) antiporter NhaA 2 (444 aa).

11 helical membrane-spanning segments follow: residues 21–41 (FSGIFLFFCAVSAMIVANSPF), 64–84 (FSIHDWINDVLMSIFFLMVGL), 102–122 (AFPVIGAVGGMIVPGVIYYVL), 131–151 (GFGIPMATDIAFALGVILLLG), 160–180 (VFLVTLAVADDLGAIVVIAVF), 185–205 (EGLHFIYLGVAAGLLILLTGI), 212–232 (HLGVYIGIGILLWFCVHHSGI), 307–327 (ALQPLCAFIIMPLFAFANAGV), 342–362 (LGVILGLVVGKPLGILSLTFL), 377–397 (WSHIFGAGMLAGIGFTMSMFV), and 413–433 (IAILLASSIAGIVGSLYLIIN).

The protein belongs to the NhaA Na(+)/H(+) (TC 2.A.33) antiporter family.

It localises to the cell inner membrane. It carries out the reaction Na(+)(in) + 2 H(+)(out) = Na(+)(out) + 2 H(+)(in). Functionally, na(+)/H(+) antiporter that extrudes sodium in exchange for external protons. The polypeptide is Na(+)/H(+) antiporter NhaA 2 (Helicobacter hepaticus (strain ATCC 51449 / 3B1)).